The chain runs to 475 residues: Ribulose bisphosphate carboxylase large chain (475 aa).

A propeptide spanning residues 1–2 (MS) is cleaved from the precursor. An N-acetylproline modification is found at Pro-3. Lys-14 carries the post-translational modification N6,N6,N6-trimethyllysine. Substrate is bound by residues Asn-123 and Thr-173. The active-site Proton acceptor is Lys-175. Lys-177 lines the substrate pocket. Mg(2+) contacts are provided by Lys-201, Asp-203, and Glu-204. Lys-201 carries the N6-carboxylysine modification. The active-site Proton acceptor is His-294. The substrate site is built by Arg-295, His-327, and Ser-379.

Belongs to the RuBisCO large chain family. Type I subfamily. Heterohexadecamer of 8 large chains and 8 small chains; disulfide-linked. The disulfide link is formed within the large subunit homodimers. Requires Mg(2+) as cofactor. The disulfide bond which can form in the large chain dimeric partners within the hexadecamer appears to be associated with oxidative stress and protein turnover.

The protein localises to the plastid. Its subcellular location is the chloroplast. The catalysed reaction is 2 (2R)-3-phosphoglycerate + 2 H(+) = D-ribulose 1,5-bisphosphate + CO2 + H2O. The enzyme catalyses D-ribulose 1,5-bisphosphate + O2 = 2-phosphoglycolate + (2R)-3-phosphoglycerate + 2 H(+). In terms of biological role, ruBisCO catalyzes two reactions: the carboxylation of D-ribulose 1,5-bisphosphate, the primary event in carbon dioxide fixation, as well as the oxidative fragmentation of the pentose substrate in the photorespiration process. Both reactions occur simultaneously and in competition at the same active site. The protein is Ribulose bisphosphate carboxylase large chain of Picea sitchensis (Sitka spruce).